Reading from the N-terminus, the 62-residue chain is Large ribosomal subunit protein bL28 (62 aa).

Belongs to the bacterial ribosomal protein bL28 family.

The sequence is that of Large ribosomal subunit protein bL28 from Caldanaerobacter subterraneus subsp. tengcongensis (strain DSM 15242 / JCM 11007 / NBRC 100824 / MB4) (Thermoanaerobacter tengcongensis).